The chain runs to 447 residues: Methionine aminopeptidase 2 (447 aa).

Residues 1–86 form a disordered region; sequence MAGATEGEDT…KNKKKKKKKI (86 aa). The span at 8 to 32 shows a compositional bias: basic and acidic residues; it reads EDTKVIESKINELNIDKPKLEDNNE. Residues 43–60 show a composition bias toward acidic residues; sequence GGDDDDDKEDDDDNDEIT. The segment covering 71-86 has biased composition (basic residues); sequence KKKKKNKNKKKKKKKI. Substrate is bound at residue H198. Positions 218, 229, and 300 each coordinate a divalent metal cation. Residue H308 participates in substrate binding. Residues E333 and E428 each coordinate a divalent metal cation.

Belongs to the peptidase M24A family. Methionine aminopeptidase eukaryotic type 2 subfamily. Requires Co(2+) as cofactor. Zn(2+) is required as a cofactor. It depends on Mn(2+) as a cofactor. Fe(2+) serves as cofactor.

The protein localises to the cytoplasm. The catalysed reaction is Release of N-terminal amino acids, preferentially methionine, from peptides and arylamides.. Its function is as follows. Cotranslationally removes the N-terminal methionine from nascent proteins. The N-terminal methionine is often cleaved when the second residue in the primary sequence is small and uncharged (Met-Ala-, Cys, Gly, Pro, Ser, Thr, or Val). This is Methionine aminopeptidase 2 from Candida albicans (strain WO-1) (Yeast).